The sequence spans 99 residues: Small ribosomal subunit protein bS20 (99 aa).

The protein belongs to the bacterial ribosomal protein bS20 family.

In terms of biological role, binds directly to 16S ribosomal RNA. The sequence is that of Small ribosomal subunit protein bS20 from Thermomicrobium roseum (strain ATCC 27502 / DSM 5159 / P-2).